We begin with the raw amino-acid sequence, 490 residues long: Betaine aldehyde dehydrogenase (490 aa).

Residues Thr-26, Ile-27, and Asp-93 each coordinate K(+). Gly-150–Trp-152 provides a ligand contact to NAD(+). Catalysis depends on Lys-162, which acts as the Charge relay system. Lys-176–Glu-179 is an NAD(+) binding site. Position 180 (Val-180) interacts with K(+). Position 230-233 (Gly-230–Thr-233) interacts with NAD(+). Leu-246 serves as a coordination point for K(+). Glu-252 serves as the catalytic Proton acceptor. Positions 254, 286, and 387 each coordinate NAD(+). Cys-286 functions as the Nucleophile in the catalytic mechanism. Cys-286 bears the Cysteine sulfenic acid (-SOH) mark. Residues Lys-457 and Gly-460 each contribute to the K(+) site. Residue Glu-464 is the Charge relay system of the active site.

It belongs to the aldehyde dehydrogenase family. Dimer of dimers. Requires K(+) as cofactor.

It carries out the reaction betaine aldehyde + NAD(+) + H2O = glycine betaine + NADH + 2 H(+). It participates in amine and polyamine biosynthesis; betaine biosynthesis via choline pathway; betaine from betaine aldehyde: step 1/1. Functionally, involved in the biosynthesis of the osmoprotectant glycine betaine. Catalyzes the irreversible oxidation of betaine aldehyde to the corresponding acid. This Pseudomonas aeruginosa (strain UCBPP-PA14) protein is Betaine aldehyde dehydrogenase.